Consider the following 197-residue polypeptide: UPF0228 protein MA_3125 (197 aa).

This sequence belongs to the UPF0228 family.

This is UPF0228 protein MA_3125 from Methanosarcina acetivorans (strain ATCC 35395 / DSM 2834 / JCM 12185 / C2A).